Reading from the N-terminus, the 60-residue chain is ATP synthase subunit J, mitochondrial (60 aa).

Residues 13–32 (ILKPMLPFFLGGAIVFYGTV) form a helical membrane-spanning segment.

It belongs to the ATPase j subunit family. In terms of assembly, F-type ATPases have 2 components, CF(1) - the catalytic core - and CF(0) - the membrane proton channel. In yeast, the dimeric form of ATP synthase consists of 17 polypeptides: alpha, beta, gamma, delta, epsilon, 4 (B), 5 (OSCP), 6 (A), 8, 9 (C), d, E (Tim11), f, g, h, i/j and k.

The protein resides in the mitochondrion membrane. Mitochondrial membrane ATP synthase (F(1)F(0) ATP synthase or Complex V) produces ATP from ADP in the presence of a proton gradient across the membrane which is generated by electron transport complexes of the respiratory chain. F-type ATPases consist of two structural domains, F(1) - containing the extramembraneous catalytic core and F(0) - containing the membrane proton channel, linked together by a central stalk and a peripheral stalk. During catalysis, ATP synthesis in the catalytic domain of F(1) is coupled via a rotary mechanism of the central stalk subunits to proton translocation. Part of the complex F(0) domain. Minor subunit located with subunit a in the membrane. The chain is ATP synthase subunit J, mitochondrial (atp18) from Schizosaccharomyces pombe (strain 972 / ATCC 24843) (Fission yeast).